Reading from the N-terminus, the 454-residue chain is Enhancer of mRNA-decapping protein 3 (454 aa).

A Sm domain is found at 1 to 61 (MSVADFYGSN…IKDLRILPKN (61 aa)). One can recognise a DFDF domain in the interval 87–123 (SKNKWSMDCDEEFDFAANLEKFDKKQVFAEFREKDKK). Positions 173–192 (SSSSNGHVTPGSKKGSRETL) are disordered. Positions 222-431 (LSQGIALAIA…NLGTGSQTWA (210 aa)) constitute a YjeF N-terminal domain.

This sequence belongs to the EDC3 family. In terms of assembly, homodimer. Interacts with dcp2.

Its subcellular location is the cytoplasm. The protein localises to the P-body. Its function is as follows. Stimulates decapping of both stable and unstable mRNA during mRNA decay. Stimulates decapping presumably by preventing the DCP1-DCP2 decapping complex from adopting an inactive conformation. Together with pdc1, acts as a scaffolding protein sufficient for the phase transition of the components of the 5' to 3' mRNA degradation machinery to form P-bodies. Intermolecular interactions between the edc3 Sm domain and at least 10 helical leucine-rich motifs in dcp2 and pdc1 build the core of the interaction network of this spontaneous clustering process. The protein is Enhancer of mRNA-decapping protein 3 (edc3) of Schizosaccharomyces pombe (strain 972 / ATCC 24843) (Fission yeast).